Consider the following 119-residue polypeptide: Evasin P983 (119 aa).

The N-terminal stretch at 1–21 is a signal peptide; it reads MKASFCVIASCLVVFALKGTA. Cystine bridges form between Cys37/Cys59, Cys55/Cys97, Cys72/Cys102, and Cys92/Cys111. Residues Asn48 and Asn67 are each glycosylated (N-linked (GlcNAc...) asparagine).

The protein localises to the secreted. Its function is as follows. Salivary chemokine-binding protein which binds to host chemokines CCL2, CCL3 and CCL8. In Amblyomma cajennense (Cayenne tick), this protein is Evasin P983.